The chain runs to 459 residues: Exodeoxyribonuclease 7 large subunit (459 aa).

This sequence belongs to the XseA family. As to quaternary structure, heterooligomer composed of large and small subunits.

The protein resides in the cytoplasm. It catalyses the reaction Exonucleolytic cleavage in either 5'- to 3'- or 3'- to 5'-direction to yield nucleoside 5'-phosphates.. Bidirectionally degrades single-stranded DNA into large acid-insoluble oligonucleotides, which are then degraded further into small acid-soluble oligonucleotides. The polypeptide is Exodeoxyribonuclease 7 large subunit (Yersinia pseudotuberculosis serotype O:3 (strain YPIII)).